The chain runs to 461 residues: Probable protein phosphatase 2C 40 (461 aa).

Positions 34 to 63 (REASAERASASASAGAGGRERERRPSVAAG) are disordered. Residues 57-321 (RPSVAAGQAC…DDTTCIVIDI (265 aa)) form the PPM-type phosphatase domain. Mn(2+) contacts are provided by Asp-98, Gly-99, Asp-273, and Asp-312. A compositionally biased stretch (basic and acidic residues) spans 439-453 (KKEAMEGKRHSRDSS). Residues 439–461 (KKEAMEGKRHSRDSSSRNSGSSE) are disordered.

The protein belongs to the PP2C family. Mg(2+) serves as cofactor. Requires Mn(2+) as cofactor. As to expression, expressed in leaves, leaf sheaths, panicles, nodes and internodes. Expressed at low levels in roots and stems.

The protein localises to the nucleus. Its subcellular location is the cytoplasm. The enzyme catalyses O-phospho-L-seryl-[protein] + H2O = L-seryl-[protein] + phosphate. It carries out the reaction O-phospho-L-threonyl-[protein] + H2O = L-threonyl-[protein] + phosphate. Its function is as follows. Mediates the negative regulation of osmotic and salt stress tolerance through regulation of the jasmonate and abscisic acid signaling pathways and modulation of the raffinose family oligosaccharide metabolism pathway. This chain is Probable protein phosphatase 2C 40, found in Oryza sativa subsp. japonica (Rice).